The primary structure comprises 143 residues: Large ribosomal subunit protein uL13 (143 aa).

The protein belongs to the universal ribosomal protein uL13 family. In terms of assembly, part of the 50S ribosomal subunit.

Its function is as follows. This protein is one of the early assembly proteins of the 50S ribosomal subunit, although it is not seen to bind rRNA by itself. It is important during the early stages of 50S assembly. The polypeptide is Large ribosomal subunit protein uL13 (Finegoldia magna (strain ATCC 29328 / DSM 20472 / WAL 2508) (Peptostreptococcus magnus)).